A 318-amino-acid chain; its full sequence is 5'-3' exonuclease (318 aa).

A 5'-3' exonuclease domain is found at 194-278; sequence AYAELALLRG…ATDAPVTLST (85 aa).

Functionally, 5'-3' exonuclease acting preferentially on double-stranded DNA. This is 5'-3' exonuclease from Mycobacterium tuberculosis (strain ATCC 25618 / H37Rv).